The sequence spans 82 residues: Small ribosomal subunit protein bS16 (82 aa).

The protein belongs to the bacterial ribosomal protein bS16 family.

The chain is Small ribosomal subunit protein bS16 from Alcanivorax borkumensis (strain ATCC 700651 / DSM 11573 / NCIMB 13689 / SK2).